Here is a 155-residue protein sequence, read N- to C-terminus: Endoribonuclease YbeY (155 aa).

H117, H121, and H127 together coordinate Zn(2+).

Belongs to the endoribonuclease YbeY family. The cofactor is Zn(2+).

The protein localises to the cytoplasm. Single strand-specific metallo-endoribonuclease involved in late-stage 70S ribosome quality control and in maturation of the 3' terminus of the 16S rRNA. The protein is Endoribonuclease YbeY of Treponema denticola (strain ATCC 35405 / DSM 14222 / CIP 103919 / JCM 8153 / KCTC 15104).